The chain runs to 396 residues: 1-deoxy-D-xylulose 5-phosphate reductoisomerase (396 aa).

6 residues coordinate NADPH: Thr-15, Gly-16, Ser-17, Ile-18, Gly-41, and Asn-130. Lys-131 is a binding site for 1-deoxy-D-xylulose 5-phosphate. An NADPH-binding site is contributed by Glu-132. Asp-155 provides a ligand contact to Mn(2+). Residues Ser-156, Glu-157, Ser-181, and His-204 each contribute to the 1-deoxy-D-xylulose 5-phosphate site. Glu-157 contacts Mn(2+). An NADPH-binding site is contributed by Gly-210. Residues Ser-217, Asn-222, Lys-223, and Glu-226 each coordinate 1-deoxy-D-xylulose 5-phosphate. Glu-226 is a binding site for Mn(2+).

This sequence belongs to the DXR family. The cofactor is Mg(2+). It depends on Mn(2+) as a cofactor.

The enzyme catalyses 2-C-methyl-D-erythritol 4-phosphate + NADP(+) = 1-deoxy-D-xylulose 5-phosphate + NADPH + H(+). Its pathway is isoprenoid biosynthesis; isopentenyl diphosphate biosynthesis via DXP pathway; isopentenyl diphosphate from 1-deoxy-D-xylulose 5-phosphate: step 1/6. Catalyzes the NADPH-dependent rearrangement and reduction of 1-deoxy-D-xylulose-5-phosphate (DXP) to 2-C-methyl-D-erythritol 4-phosphate (MEP). This chain is 1-deoxy-D-xylulose 5-phosphate reductoisomerase, found in Bifidobacterium longum (strain NCC 2705).